Reading from the N-terminus, the 242-residue chain is Biosynthetic peptidoglycan transglycosylase (242 aa).

The helical transmembrane segment at 19–39 threads the bilayer; the sequence is LMVVLAVFWGGGIALFSVAPV.

It belongs to the glycosyltransferase 51 family.

It is found in the cell inner membrane. It catalyses the reaction [GlcNAc-(1-&gt;4)-Mur2Ac(oyl-L-Ala-gamma-D-Glu-L-Lys-D-Ala-D-Ala)](n)-di-trans,octa-cis-undecaprenyl diphosphate + beta-D-GlcNAc-(1-&gt;4)-Mur2Ac(oyl-L-Ala-gamma-D-Glu-L-Lys-D-Ala-D-Ala)-di-trans,octa-cis-undecaprenyl diphosphate = [GlcNAc-(1-&gt;4)-Mur2Ac(oyl-L-Ala-gamma-D-Glu-L-Lys-D-Ala-D-Ala)](n+1)-di-trans,octa-cis-undecaprenyl diphosphate + di-trans,octa-cis-undecaprenyl diphosphate + H(+). It functions in the pathway cell wall biogenesis; peptidoglycan biosynthesis. In terms of biological role, peptidoglycan polymerase that catalyzes glycan chain elongation from lipid-linked precursors. This chain is Biosynthetic peptidoglycan transglycosylase, found in Escherichia coli O17:K52:H18 (strain UMN026 / ExPEC).